The primary structure comprises 1110 residues: cGMP-specific 3',5'-cyclic phosphodiesterase (1110 aa).

Composition is skewed to low complexity over residues 1-25 and 35-55; these read MTDV…SSAS and TSTA…ASGA. Disordered regions lie at residues 1-55, 67-128, and 184-203; these read MTDV…ASGA, ISNQ…QQDV, and ASPT…SASS. The span at 88–103 shows a compositional bias: pro residues; sequence APYPPVPAAKPKPTPT. Positions 192–203 are enriched in low complexity; sequence SPRSLSNSSASS. GAF domains follow at residues 233 to 385 and 417 to 601; these read DIDV…GIGI and NLEC…GLGI. Residues 631-954 form the PDEase domain; the sequence is SQDQTEKLTQ…RNWQDLAEKV (324 aa). His-707 functions as the Proton donor in the catalytic mechanism. A divalent metal cation contacts are provided by His-711, His-747, Asp-748, and Asp-858. 2 disordered regions span residues 997–1028 and 1040–1110; these read AQHG…TGAL and LYNS…CSLL. Composition is skewed to basic and acidic residues over residues 1006–1015 and 1056–1068; these read DDSHTPEHQR and LESH…DDKS. Over residues 1082–1097 the composition is skewed to low complexity; sequence GRMSASSSTSSAGTVV. The segment covering 1100 to 1110 has biased composition (basic residues); it reads SKKRSKLCSLL. Cys-1107 bears the Cysteine methyl ester mark. Cys-1107 carries S-farnesyl cysteine lipidation. Residues 1108 to 1110 constitute a propeptide, removed in mature form; sequence SLL.

Belongs to the cyclic nucleotide phosphodiesterase family. As to quaternary structure, interacts with PrBP. The cofactor is a divalent metal cation.

The protein localises to the cell membrane. The enzyme catalyses 3',5'-cyclic GMP + H2O = GMP + H(+). In terms of biological role, has a role regulating cGMP transport in Malpighian tubule principal cells. The polypeptide is cGMP-specific 3',5'-cyclic phosphodiesterase (Drosophila pseudoobscura pseudoobscura (Fruit fly)).